A 257-amino-acid chain; its full sequence is Acyl-[acyl-carrier-protein]--UDP-N-acetylglucosamine O-acyltransferase (257 aa).

The protein belongs to the transferase hexapeptide repeat family. LpxA subfamily. As to quaternary structure, homotrimer.

The protein localises to the cytoplasm. The enzyme catalyses a (3R)-hydroxyacyl-[ACP] + UDP-N-acetyl-alpha-D-glucosamine = a UDP-3-O-[(3R)-3-hydroxyacyl]-N-acetyl-alpha-D-glucosamine + holo-[ACP]. The protein operates within glycolipid biosynthesis; lipid IV(A) biosynthesis; lipid IV(A) from (3R)-3-hydroxytetradecanoyl-[acyl-carrier-protein] and UDP-N-acetyl-alpha-D-glucosamine: step 1/6. In terms of biological role, involved in the biosynthesis of lipid A, a phosphorylated glycolipid that anchors the lipopolysaccharide to the outer membrane of the cell. In Fusobacterium nucleatum subsp. nucleatum (strain ATCC 25586 / DSM 15643 / BCRC 10681 / CIP 101130 / JCM 8532 / KCTC 2640 / LMG 13131 / VPI 4355), this protein is Acyl-[acyl-carrier-protein]--UDP-N-acetylglucosamine O-acyltransferase.